A 438-amino-acid polypeptide reads, in one-letter code: Protein DJ-1 homolog B (438 aa).

A chloroplast-targeting transit peptide spans 1–45; that stretch reads MASSSLCHRYFNKITVTPFFNTKKLHHYSPRRISLRVNRRSFSIS. 2 consecutive PfpI endopeptidase domains span residues 53 to 220 and 258 to 424; these read KKVL…EQLL and PQIL…EKFY.

The protein belongs to the peptidase C56 family. Homodimer.

Its subcellular location is the plastid. The protein resides in the chloroplast. Functionally, may be involved in oxidative stress response. The sequence is that of Protein DJ-1 homolog B (DJ1B) from Arabidopsis thaliana (Mouse-ear cress).